We begin with the raw amino-acid sequence, 129 residues long: Small ribosomal subunit protein uS11 (129 aa).

It belongs to the universal ribosomal protein uS11 family. As to quaternary structure, part of the 30S ribosomal subunit. Interacts with proteins S7 and S18. Binds to IF-3.

Located on the platform of the 30S subunit, it bridges several disparate RNA helices of the 16S rRNA. Forms part of the Shine-Dalgarno cleft in the 70S ribosome. The protein is Small ribosomal subunit protein uS11 of Desulfovibrio desulfuricans (strain ATCC 27774 / DSM 6949 / MB).